The following is a 177-amino-acid chain: von Ebner gland protein 2 (177 aa).

Positions 1–18 are cleaved as a signal peptide; sequence MKALLLTFSLSLLAALQA. Cysteines 80 and 172 form a disulfide.

It belongs to the calycin superfamily. Lipocalin family. In terms of assembly, homodimer.

It is found in the secreted. In terms of biological role, could play a role in taste reception. Could be necessary for the concentration and delivery of sapid molecules in the gustatory system. The polypeptide is von Ebner gland protein 2 (Vegp2) (Rattus norvegicus (Rat)).